The chain runs to 575 residues: Preterminal protein (575 aa).

The short motif at 309–318 is the Nuclear localization signal element; it reads RLPRVTRRRR. The interval 314–340 is disordered; sequence TRRRRRPPSPAPPPEEIEEAAMEVEEP. The span at 328–340 shows a compositional bias: acidic residues; the sequence is EEIEEAAMEVEEP. An O-(5'-phospho-DNA)-serine modification is found at Ser510.

The protein belongs to the adenoviridae terminal protein family. Heterodimer with the polymerase; this heterodimer binds to bp 9 to 18 of the genome. Interacts with host POU2F1; POU2F1 binds to the auxiliary sequences in the inverted terminal repeats and tethers the pTP-POL heterodimer to the origin DNA thereby participating in the assembly of the pre-initiation complex (POL-TP-DBP-NFIA-POU2F1). Preterminal protein is used to replicate viral genome, upon genomic encapsidation it is processed first into iTP and finally into TP by adenovirus protease.

It is found in the host nucleus matrix. Functionally, protein covalently bound to the viral DNA that acts as a primer for viral genomic replication by DNA strand displacement. Assembles on the viral origin of replication in an initiation complex with viral polymerase, DBP, host NFIA and host POU2F1/OCT1. During initiation, the polymerase covalently couples the first dCTP with Ser-580 of pTP. The terminal protein stimulates the template activity over 20 fold compared to protein-free templates. Neo-synthesized viral genomes are linked to two preterminal proteins, one for each 5' end. These new genomes are encapsidated in the nucleus, and during capsid maturation by viral protease, preterminal protein is first cleaved into intermediary (iTP), then into mature TP. May play a role in host nuclear matrix localization of genomic DNA. The chain is Preterminal protein from Fowl adenovirus A serotype 1 (strain CELO / Phelps) (FAdV-1).